Here is a 341-residue protein sequence, read N- to C-terminus: MKALSKLKAEEGIWMTDVPVPELGHNDLLIKIRKTAICGTDVHIYNWDEWSQKTIPVPMVVGHEYVGEVVGIGQEVKGFKIGDRVSGEGHITCGHCRNCRGGRTHLCRNTIGVGVNRPGCFAEYLVIPAFNAFKIPGNISDDLASIFDPFGNAVHTALSFDLVGEDVLVSGAGPIGIMAAAVAKHVGARNVVITDVNEYRLELARKMGITRAANVAKENLNDVMAELGMTEGFDVGLEMSGAPPAFRTMLDTMNHGGRIAMLGIPPSDMSIDWTKVIFKGLFIKGIYGREMFETWYKMAALIQSGLDLSPIITHRFSIDDFQKGFDAMRSGQSGKVILSWD.

Residue Cys38 coordinates Zn(2+). Residues Thr40 and His43 each act as charge relay system in the active site. Residues His63, Glu64, Cys93, Cys96, Cys99, and Cys107 each contribute to the Zn(2+) site. NAD(+) is bound by residues Ile175, Asp195, Arg200, Leu262–Ile264, and Ile286–Tyr287.

Belongs to the zinc-containing alcohol dehydrogenase family. As to quaternary structure, homotetramer. Zn(2+) serves as cofactor.

The protein resides in the cytoplasm. The catalysed reaction is L-threonine + NAD(+) = (2S)-2-amino-3-oxobutanoate + NADH + H(+). Its pathway is amino-acid degradation; L-threonine degradation via oxydo-reductase pathway; glycine from L-threonine: step 1/2. Its function is as follows. Catalyzes the NAD(+)-dependent oxidation of L-threonine to 2-amino-3-ketobutyrate. The polypeptide is L-threonine 3-dehydrogenase (Shigella dysenteriae serotype 1 (strain Sd197)).